The sequence spans 289 residues: Urease accessory protein UreD (289 aa).

The protein belongs to the UreD family. As to quaternary structure, ureD, UreF and UreG form a complex that acts as a GTP-hydrolysis-dependent molecular chaperone, activating the urease apoprotein by helping to assemble the nickel containing metallocenter of UreC. The UreE protein probably delivers the nickel.

The protein localises to the cytoplasm. In terms of biological role, required for maturation of urease via the functional incorporation of the urease nickel metallocenter. The protein is Urease accessory protein UreD of Cupriavidus pinatubonensis (strain JMP 134 / LMG 1197) (Cupriavidus necator (strain JMP 134)).